The primary structure comprises 874 residues: Valine--tRNA ligase (874 aa).

The 'HIGH' region motif lies at 42–52 (PNITGRIHIGH). The short motif at 522–526 (KMSKS) is the 'KMSKS' region element. Lysine 525 contributes to the ATP binding site. The stretch at 806–874 (DYIDIDTEKQ…KLQALLKEIS (69 aa)) forms a coiled coil.

It belongs to the class-I aminoacyl-tRNA synthetase family. ValS type 1 subfamily. Monomer.

It localises to the cytoplasm. The enzyme catalyses tRNA(Val) + L-valine + ATP = L-valyl-tRNA(Val) + AMP + diphosphate. In terms of biological role, catalyzes the attachment of valine to tRNA(Val). As ValRS can inadvertently accommodate and process structurally similar amino acids such as threonine, to avoid such errors, it has a 'posttransfer' editing activity that hydrolyzes mischarged Thr-tRNA(Val) in a tRNA-dependent manner. This Petrotoga mobilis (strain DSM 10674 / SJ95) protein is Valine--tRNA ligase.